A 159-amino-acid polypeptide reads, in one-letter code: Putative ribosomal RNA large subunit methyltransferase H (159 aa).

S-adenosyl-L-methionine contacts are provided by residues Leu76, Gly108, and 127–132 (LSPLTF).

This sequence belongs to the RNA methyltransferase RlmH family.

Its subcellular location is the cytoplasm. The enzyme catalyses pseudouridine(1915) in 23S rRNA + S-adenosyl-L-methionine = N(3)-methylpseudouridine(1915) in 23S rRNA + S-adenosyl-L-homocysteine + H(+). In terms of biological role, specifically methylates the pseudouridine at position 1915 (m3Psi1915) in 23S rRNA. The chain is Putative ribosomal RNA large subunit methyltransferase H from Methanoregula boonei (strain DSM 21154 / JCM 14090 / 6A8).